A 435-amino-acid polypeptide reads, in one-letter code: Mitochondrial distribution and morphology protein 12 (435 aa).

One can recognise an SMP-LTD domain in the interval 1–435; the sequence is MSIEVDWGAA…VYPSFWTFLV (435 aa). Disordered regions lie at residues 73 to 113 and 186 to 268; these read DEDD…AINH and WNDS…TSEE. The segment covering 96-113 has biased composition (basic and acidic residues); sequence THPELNESSFRDDNAINH. Low complexity predominate over residues 218 to 238; sequence SSNPTSRPSTSSTLPSHPSGS. Residues 251–268 show a composition bias toward basic and acidic residues; that stretch reads HGSHPEEHGHLDDPTSEE.

It belongs to the MDM12 family. As to quaternary structure, component of the ER-mitochondria encounter structure (ERMES) or MDM complex, composed of mmm1, mdm10, mdm12 and mdm34. A mmm1 homodimer associates with one molecule of mdm12 on each side in a pairwise head-to-tail manner, and the SMP-LTD domains of mmm1 and mdm12 generate a continuous hydrophobic tunnel for phospholipid trafficking.

The protein resides in the mitochondrion outer membrane. The protein localises to the endoplasmic reticulum membrane. Its function is as follows. Component of the ERMES/MDM complex, which serves as a molecular tether to connect the endoplasmic reticulum (ER) and mitochondria. Components of this complex are involved in the control of mitochondrial shape and protein biogenesis, and function in nonvesicular lipid trafficking between the ER and mitochondria. Mdm12 is required for the interaction of the ER-resident membrane protein mmm1 and the outer mitochondrial membrane-resident beta-barrel protein mdm10. The mdm12-mmm1 subcomplex functions in the major beta-barrel assembly pathway that is responsible for biogenesis of all mitochondrial outer membrane beta-barrel proteins, and acts in a late step after the SAM complex. The mdm10-mdm12-mmm1 subcomplex further acts in the TOM40-specific pathway after the action of the mdm12-mmm1 complex. Essential for establishing and maintaining the structure of mitochondria and maintenance of mtDNA nucleoids. This is Mitochondrial distribution and morphology protein 12 from Aspergillus niger (strain ATCC MYA-4892 / CBS 513.88 / FGSC A1513).